The primary structure comprises 277 residues: Large ribosomal subunit protein mL46 (277 aa).

N6-succinyllysine is present on K217. K228 bears the N6-acetyllysine mark. K246 carries the N6-succinyllysine modification.

The protein belongs to the mitochondrion-specific ribosomal protein mL46 family. In terms of assembly, component of the mitochondrial ribosome large subunit (39S) which comprises a 16S rRNA and about 50 distinct proteins.

The protein localises to the mitochondrion. The polypeptide is Large ribosomal subunit protein mL46 (Mrpl46) (Rattus norvegicus (Rat)).